The following is a 269-amino-acid chain: NAD kinase (269 aa).

Catalysis depends on D45, which acts as the Proton acceptor. NAD(+) is bound by residues 45–46, 122–123, R149, D151, and A186; these read DG and NE.

This sequence belongs to the NAD kinase family. A divalent metal cation is required as a cofactor.

It localises to the cytoplasm. The enzyme catalyses NAD(+) + ATP = ADP + NADP(+) + H(+). Involved in the regulation of the intracellular balance of NAD and NADP, and is a key enzyme in the biosynthesis of NADP. Catalyzes specifically the phosphorylation on 2'-hydroxyl of the adenosine moiety of NAD to yield NADP. The polypeptide is NAD kinase (Staphylococcus epidermidis (strain ATCC 35984 / DSM 28319 / BCRC 17069 / CCUG 31568 / BM 3577 / RP62A)).